Consider the following 185-residue polypeptide: Ion-translocating oxidoreductase complex subunit B (185 aa).

Residues 1-26 (MNHILLIILIFAALALIFGLLLGFAA) are hydrophobic. In terms of domain architecture, 4Fe-4S spans 32–90 (ESDPIVDQLDALLPQTQCGQCGYPGCRPYAEAIANGDSINKCVPGGAQTIQNIADLMGV). Positions 49, 52, 57, 73, 115, 118, 121, 125, 145, 148, 151, and 155 each coordinate [4Fe-4S] cluster. 2 4Fe-4S ferredoxin-type domains span residues 106-135 (RVAFIHENLCIGCTKCIQACPVDAIIGAPK) and 136-165 (LMHTILRSECTGCDLCVDPCPTNCIEMIEL).

The protein belongs to the 4Fe4S bacterial-type ferredoxin family. RnfB subfamily. As to quaternary structure, the complex is composed of six subunits: RnfA, RnfB, RnfC, RnfD, RnfE and RnfG. It depends on [4Fe-4S] cluster as a cofactor.

It localises to the cell inner membrane. Its function is as follows. Part of a membrane-bound complex that couples electron transfer with translocation of ions across the membrane. The chain is Ion-translocating oxidoreductase complex subunit B from Tolumonas auensis (strain DSM 9187 / NBRC 110442 / TA 4).